Reading from the N-terminus, the 434-residue chain is Enolase (434 aa).

Residue Q165 coordinates (2R)-2-phosphoglycerate. Residue E207 is the Proton donor of the active site. The Mg(2+) site is built by D244, E291, and D318. Residues K343, R372, S373, and K394 each coordinate (2R)-2-phosphoglycerate. K343 (proton acceptor) is an active-site residue.

The protein belongs to the enolase family. Mg(2+) serves as cofactor.

It is found in the cytoplasm. It localises to the secreted. The protein localises to the cell surface. The catalysed reaction is (2R)-2-phosphoglycerate = phosphoenolpyruvate + H2O. Its pathway is carbohydrate degradation; glycolysis; pyruvate from D-glyceraldehyde 3-phosphate: step 4/5. Catalyzes the reversible conversion of 2-phosphoglycerate (2-PG) into phosphoenolpyruvate (PEP). It is essential for the degradation of carbohydrates via glycolysis. This chain is Enolase, found in Staphylococcus epidermidis (strain ATCC 35984 / DSM 28319 / BCRC 17069 / CCUG 31568 / BM 3577 / RP62A).